A 144-amino-acid chain; its full sequence is MKILVLHGPNLNMLGTREPEIYGSLTLDDINAALSQLALDLGIEIECFQTNSEGRLVDRIQSAAGLFDGILINPAAYTHTSIAIRDAIAAAALPAVEVHLSNIHNREKFRTKSYIAPMAIGQICGFGADSYLLGLRAIFNHIKK.

Tyr22 serves as the catalytic Proton acceptor. Residues Asn73, His79, and Asp86 each contribute to the substrate site. His99 acts as the Proton donor in catalysis. Substrate is bound by residues 100–101 (LS) and Arg110.

It belongs to the type-II 3-dehydroquinase family. Homododecamer.

It carries out the reaction 3-dehydroquinate = 3-dehydroshikimate + H2O. The protein operates within metabolic intermediate biosynthesis; chorismate biosynthesis; chorismate from D-erythrose 4-phosphate and phosphoenolpyruvate: step 3/7. Functionally, catalyzes a trans-dehydration via an enolate intermediate. In Geotalea daltonii (strain DSM 22248 / JCM 15807 / FRC-32) (Geobacter daltonii), this protein is 3-dehydroquinate dehydratase.